Consider the following 629-residue polypeptide: tRNA uridine 5-carboxymethylaminomethyl modification enzyme MnmG (629 aa).

14–19 (GAGHAG) is a binding site for FAD. Residue 274–288 (GPRYCPSIEDKVVRF) coordinates NAD(+).

Belongs to the MnmG family. In terms of assembly, homodimer. Heterotetramer of two MnmE and two MnmG subunits. It depends on FAD as a cofactor.

It localises to the cytoplasm. NAD-binding protein involved in the addition of a carboxymethylaminomethyl (cmnm) group at the wobble position (U34) of certain tRNAs, forming tRNA-cmnm(5)s(2)U34. The chain is tRNA uridine 5-carboxymethylaminomethyl modification enzyme MnmG from Xylella fastidiosa (strain Temecula1 / ATCC 700964).